We begin with the raw amino-acid sequence, 398 residues long: ATP-dependent RNA helicase eIF4A (398 aa).

The short motif at aspartate 25 to glutamine 53 is the Q motif element. The Helicase ATP-binding domain occupies isoleucine 56–isoleucine 226. Residue alanine 69–threonine 76 coordinates ATP. The short motif at aspartate 174–aspartate 177 is the DEAD box element. The Helicase C-terminal domain occupies glycine 237–isoleucine 398.

Belongs to the DEAD box helicase family. eIF4A subfamily. Component of the eIF4F complex, which composition varies with external and internal environmental conditions. It is composed of at least eIF4A, eIF4E and eIF4G.

It localises to the cytoplasm. The catalysed reaction is ATP + H2O = ADP + phosphate + H(+). Its function is as follows. ATP-dependent RNA helicase which is a subunit of the eIF4F complex involved in cap recognition and is required for mRNA binding to ribosome. In the current model of translation initiation, eIF4A unwinds RNA secondary structures in the 5'-UTR of mRNAs which is necessary to allow efficient binding of the small ribosomal subunit, and subsequent scanning for the initiator codon. This Neosartorya fischeri (strain ATCC 1020 / DSM 3700 / CBS 544.65 / FGSC A1164 / JCM 1740 / NRRL 181 / WB 181) (Aspergillus fischerianus) protein is ATP-dependent RNA helicase eIF4A (tif1).